The following is a 442-amino-acid chain: Myb family transcription factor PHL13 (442 aa).

Positions 235-295 (MTSKQRMRWT…HLQKYRTARY (61 aa)) constitute an HTH myb-type domain. The H-T-H motif DNA-binding region spans 266–291 (PKAVLKLINSPGLTVYHVKSHLQKYR). Residues 329 to 349 (TEALRLQMKVQKQLHEQLEIQ) form a coiled coil region. The LHEQLE signature appears at 342–347 (LHEQLE). Over residues 370–380 (QQKMQENKKDS) the composition is skewed to basic and acidic residues. Positions 370–442 (QQKMQENKKD…TSNRKRVRED (73 aa)) are disordered. Polar residues predominate over residues 395–434 (SPNLSQPFLHKATNSEPSITQKLQNGSSTMDQSESTSGTS).

Belongs to the MYB-CC family.

The protein resides in the nucleus. This is Myb family transcription factor PHL13 from Arabidopsis thaliana (Mouse-ear cress).